The primary structure comprises 292 residues: RNA 5'-monophosphate methyltransferase (292 aa).

The tract at residues 1–21 (MAVPTELDGGSVKETAAEEES) is disordered. Residues R46, N76, D110, 135–136 (DF), and M164 each bind S-adenosyl-L-methionine. The 222-residue stretch at 53–274 (ELLRQLFPES…KQTIETHPIP (222 aa)) folds into the Bin3-type SAM domain.

Belongs to the methyltransferase superfamily. As to quaternary structure, interacts with DICER1; the interaction may be mediated by RNA.

It localises to the cytoplasm. The enzyme catalyses a 5'-end 5'-phospho-ribonucleoside-RNA + S-adenosyl-L-methionine = a 5'-end (5'-methylphospho)-ribonucleoside-RNA + S-adenosyl-L-homocysteine. It carries out the reaction a 5'-end 5'-phospho-ribonucleoside-RNA + 2 S-adenosyl-L-methionine = a 5'-end (5'-bismethylphospho)-ribonucleoside-RNA + 2 S-adenosyl-L-homocysteine. O-methyltransferase that specifically monomethylates 5'-monophosphate of cytoplasmic histidyl tRNA (tRNA(His)), acting as a capping enzyme by protecting tRNA(His) from cleavage by DICER1. Also able, with less efficiently, to methylate the 5' monophosphate of a subset of pre-miRNAs, acting as a negative regulator of miRNA processing. The 5' monophosphate of pre-miRNAs is recognized by DICER1 and is required for pre-miRNAs processing: methylation at this position reduces the processing of pre-miRNAs by DICER1. Was also reported to mediate dimethylation of pre-miR-145; however dimethylation cannot be reproduced by another group which observes a monomethylation of pre-miR-145. The protein is RNA 5'-monophosphate methyltransferase of Homo sapiens (Human).